The sequence spans 549 residues: Glucose-6-phosphate isomerase (549 aa).

The Proton donor role is filled by Glu-353. Active-site residues include His-384 and Lys-513.

The protein belongs to the GPI family.

It localises to the cytoplasm. The enzyme catalyses alpha-D-glucose 6-phosphate = beta-D-fructose 6-phosphate. Its pathway is carbohydrate biosynthesis; gluconeogenesis. It participates in carbohydrate degradation; glycolysis; D-glyceraldehyde 3-phosphate and glycerone phosphate from D-glucose: step 2/4. Catalyzes the reversible isomerization of glucose-6-phosphate to fructose-6-phosphate. In Brucella suis (strain ATCC 23445 / NCTC 10510), this protein is Glucose-6-phosphate isomerase.